The sequence spans 505 residues: MKALIIDCLASGDGKRILARDVIGAGPRTVKGILQSEGIEAKITPVEDLDIKDIKKYNLIFISAMTSDFKCVKKLVERIRLKTDSKIIVGGPIANDINILEKIEADISIVGEGEITIRELIKKDFDAEDVKGTTYWDYNEDELKINPLREILTDLKLITPSTEIKDYKNYFSARVYVEVVRGCSNFKRPLLLCTNKKCNLCENGTLKCPLNINPGCGFCSVPSVFGYARSRDEEDILKEVEALLKEGVNRIVLSAPDFLDYKRGEKLINPYFPEPNYEAIESLLSKCKDLADKYNANVLIENIKANLFNEKVAEIFSKYLKTPIYIGCESGDKNHCKLLGRPTTPDDVLKAVKIAKKYNLKAQVYFIYGLPGENEETAKNTVNFMHKIKNYIDKITVYKFRPLPMSAFQNFKPNITKYSLLIRETANKINLEIKKKYIGRVLEVIISERHFRNKRDAIGYLPDSGLMVVVKDGAKFIGKTKKVKIIKAYEKYLEGRILKTWLCKY.

In terms of domain architecture, Radical SAM core spans 193-440; that stretch reads CTNKKCNLCE…LEIKKKYIGR (248 aa). Residues C208, C216, and C219 each contribute to the [4Fe-4S] cluster site. Positions 435–499 constitute a TRAM domain; the sequence is KKYIGRVLEV…EKYLEGRILK (65 aa).

[4Fe-4S] cluster serves as cofactor.

This is an uncharacterized protein from Methanocaldococcus jannaschii (strain ATCC 43067 / DSM 2661 / JAL-1 / JCM 10045 / NBRC 100440) (Methanococcus jannaschii).